An 883-amino-acid chain; its full sequence is Phosphoenolpyruvate carboxylase (883 aa).

Catalysis depends on residues histidine 141 and lysine 547.

The protein belongs to the PEPCase type 1 family. It depends on Mg(2+) as a cofactor.

It catalyses the reaction oxaloacetate + phosphate = phosphoenolpyruvate + hydrogencarbonate. In terms of biological role, forms oxaloacetate, a four-carbon dicarboxylic acid source for the tricarboxylic acid cycle. This chain is Phosphoenolpyruvate carboxylase, found in Chromohalobacter salexigens (strain ATCC BAA-138 / DSM 3043 / CIP 106854 / NCIMB 13768 / 1H11).